The sequence spans 1018 residues: Isoleucine--tRNA ligase (1018 aa).

A 'HIGH' region motif is present at residues 43-53 (PYTTGRIHLGT). The short motif at 586–590 (KMSKS) is the 'KMSKS' region element. An ATP-binding site is contributed by lysine 589.

The protein belongs to the class-I aminoacyl-tRNA synthetase family. IleS type 2 subfamily. Monomer. Requires Zn(2+) as cofactor.

It is found in the cytoplasm. The enzyme catalyses tRNA(Ile) + L-isoleucine + ATP = L-isoleucyl-tRNA(Ile) + AMP + diphosphate. Catalyzes the attachment of isoleucine to tRNA(Ile). As IleRS can inadvertently accommodate and process structurally similar amino acids such as valine, to avoid such errors it has two additional distinct tRNA(Ile)-dependent editing activities. One activity is designated as 'pretransfer' editing and involves the hydrolysis of activated Val-AMP. The other activity is designated 'posttransfer' editing and involves deacylation of mischarged Val-tRNA(Ile). The protein is Isoleucine--tRNA ligase of Archaeoglobus fulgidus (strain ATCC 49558 / DSM 4304 / JCM 9628 / NBRC 100126 / VC-16).